The primary structure comprises 193 residues: Large ribosomal subunit protein bL25 (193 aa).

It belongs to the bacterial ribosomal protein bL25 family. CTC subfamily. As to quaternary structure, part of the 50S ribosomal subunit; part of the 5S rRNA/L5/L18/L25 subcomplex. Contacts the 5S rRNA. Binds to the 5S rRNA independently of L5 and L18.

This is one of the proteins that binds to the 5S RNA in the ribosome where it forms part of the central protuberance. The chain is Large ribosomal subunit protein bL25 from Oleidesulfovibrio alaskensis (strain ATCC BAA-1058 / DSM 17464 / G20) (Desulfovibrio alaskensis).